A 125-amino-acid chain; its full sequence is Prepro-urotensin II-gamma (125 aa).

The N-terminal stretch at 1–21 is a signal peptide; that stretch reads MMCNLLLSCSVLLLSCSHLLA. Positions 109-111 are excised as a propeptide; the sequence is QFR. Cysteine 119 and cysteine 124 are joined by a disulfide.

The protein belongs to the urotensin-2 family.

The protein resides in the secreted. Its function is as follows. Urotensin is found in the teleost caudal neurosecretory system. It has a suggested role in osmoregulation and as a corticotropin-releasing factor. The non-hormonal portion of this precursor may be a urotensin binding protein, urophysin. This is Prepro-urotensin II-gamma from Cyprinus carpio (Common carp).